The sequence spans 174 residues: UPF0340 protein SH0921 (174 aa).

This sequence belongs to the UPF0340 family.

This chain is UPF0340 protein SH0921, found in Staphylococcus haemolyticus (strain JCSC1435).